Reading from the N-terminus, the 483-residue chain is Acetyl-coenzyme A carboxylase carboxyl transferase subunit beta, chloroplastic (483 aa).

One can recognise a CoA carboxyltransferase N-terminal domain in the interval 221-483; the sequence is LWVQCENCYG…FQFHGFFPRP (263 aa). Residues cysteine 225, cysteine 228, cysteine 244, and cysteine 247 each contribute to the Zn(2+) site. The C4-type zinc finger occupies 225–247; it reads CENCYGLNYKKFFSSKMNICEQC.

The protein belongs to the AccD/PCCB family. In terms of assembly, acetyl-CoA carboxylase is a heterohexamer composed of biotin carboxyl carrier protein, biotin carboxylase and 2 subunits each of ACCase subunit alpha and ACCase plastid-coded subunit beta (accD). Requires Zn(2+) as cofactor.

It is found in the plastid. The protein localises to the chloroplast stroma. The catalysed reaction is N(6)-carboxybiotinyl-L-lysyl-[protein] + acetyl-CoA = N(6)-biotinyl-L-lysyl-[protein] + malonyl-CoA. It functions in the pathway lipid metabolism; malonyl-CoA biosynthesis; malonyl-CoA from acetyl-CoA: step 1/1. Component of the acetyl coenzyme A carboxylase (ACC) complex. Biotin carboxylase (BC) catalyzes the carboxylation of biotin on its carrier protein (BCCP) and then the CO(2) group is transferred by the transcarboxylase to acetyl-CoA to form malonyl-CoA. The polypeptide is Acetyl-coenzyme A carboxylase carboxyl transferase subunit beta, chloroplastic (Nuphar advena (Common spatterdock)).